The chain runs to 466 residues: Argininosuccinate lyase (466 aa).

It belongs to the lyase 1 family. Argininosuccinate lyase subfamily.

Its subcellular location is the cytoplasm. It carries out the reaction 2-(N(omega)-L-arginino)succinate = fumarate + L-arginine. The protein operates within amino-acid biosynthesis; L-arginine biosynthesis; L-arginine from L-ornithine and carbamoyl phosphate: step 3/3. The protein is Argininosuccinate lyase of Brucella anthropi (strain ATCC 49188 / DSM 6882 / CCUG 24695 / JCM 21032 / LMG 3331 / NBRC 15819 / NCTC 12168 / Alc 37) (Ochrobactrum anthropi).